Here is a 449-residue protein sequence, read N- to C-terminus: Glucose-6-phosphate isomerase (449 aa).

The Proton donor role is filled by glutamate 291. Catalysis depends on residues histidine 312 and lysine 426.

Belongs to the GPI family.

The protein localises to the cytoplasm. It catalyses the reaction alpha-D-glucose 6-phosphate = beta-D-fructose 6-phosphate. It participates in carbohydrate biosynthesis; gluconeogenesis. It functions in the pathway carbohydrate degradation; glycolysis; D-glyceraldehyde 3-phosphate and glycerone phosphate from D-glucose: step 2/4. Its function is as follows. Catalyzes the reversible isomerization of glucose-6-phosphate to fructose-6-phosphate. The polypeptide is Glucose-6-phosphate isomerase (Streptococcus pneumoniae (strain ATCC BAA-255 / R6)).